Here is a 73-residue protein sequence, read N- to C-terminus: Large ribosomal subunit protein bL31 (73 aa).

It belongs to the bacterial ribosomal protein bL31 family. Type A subfamily. Part of the 50S ribosomal subunit.

Functionally, binds the 23S rRNA. This Brucella abortus (strain 2308) protein is Large ribosomal subunit protein bL31.